The following is a 662-amino-acid chain: PAN2-PAN3 deadenylation complex subunit PAN3 (662 aa).

2 disordered regions span residues 1-29 and 53-133; these read MASAGKPALDDSRRGTGSPKIKGRENAKD and DPHK…DTVT. The C3H1-type zinc-finger motif lies at 26-55; it reads NAKDTLCRNITIYGRCRYEDKGCAFNHDPH. Low complexity predominate over residues 75–102; the sequence is SFTPSLLSSNGSSPTSTPATTKKMTTIS. Positions 115 to 133 are enriched in polar residues; it reads SVVSRSNASTPGLRQDTVT. The pseudokinase domain stretch occupies residues 263–525; that stretch reads QTLPNTQLPA…NIDVFITGIS (263 aa). Residues R315, 364-371, and 425-426 each bind ATP; these read DYHPLSKT and SK. Positions 526–564 form a coiled coil; sequence SQLMSTFDSALHLDDQLTSDLSRELENGRLVRLMAKLNF. A knob domain region spans residues 565 to 662; the sequence is VNERPEYEHD…ALMKPARRMH (98 aa).

It belongs to the protein kinase superfamily. PAN3 family. As to quaternary structure, homodimer. Forms a heterotrimer with a catalytic subunit pan2 to form the poly(A)-nuclease (PAN) deadenylation complex. Interacts (via PAM-2 motif) with poly(A)-binding protein pab1 (via PABC domain), conferring substrate specificity of the enzyme complex.

The protein resides in the cytoplasm. Its function is as follows. Regulatory subunit of the poly(A)-nuclease (PAN) deadenylation complex, one of two cytoplasmic mRNA deadenylases involved in mRNA turnover. PAN specifically shortens poly(A) tails of RNA and the activity is stimulated by poly(A)-binding protein pab1. PAN deadenylation is followed by rapid degradation of the shortened mRNA tails by the CCR4-NOT complex. Deadenylated mRNAs are then degraded by two alternative mechanisms, namely exosome-mediated 3'-5' exonucleolytic degradation, or deadenylation-dependent mRNA decaping and subsequent 5'-3' exonucleolytic degradation by xrn1. May also be involved in post-transcriptional maturation of mRNA poly(A) tails. pan3 acts as a positive regulator for PAN activity, recruiting the catalytic subunit pan2 to mRNA via its interaction with RNA and with pab1. The polypeptide is PAN2-PAN3 deadenylation complex subunit PAN3 (Aspergillus fumigatus (strain ATCC MYA-4609 / CBS 101355 / FGSC A1100 / Af293) (Neosartorya fumigata)).